We begin with the raw amino-acid sequence, 271 residues long: Interleukin-1 alpha (271 aa).

The propeptide occupies 1-112 (MAKVPDMFED…DSEEEIIKPR (112 aa)). Lys82 is subject to N6-acetyllysine. The tract at residues 82 to 86 (KKRRL) is nuclear localization signal (NLS). Ser87 bears the Phosphoserine mark. N-linked (GlcNAc...) asparagine glycans are attached at residues Asn102, Asn121, Asn137, and Asn141.

The protein belongs to the IL-1 family. In terms of assembly, monomer. Interacts with TMED10; the interaction mediates the translocation from the cytoplasm into the ERGIC (endoplasmic reticulum-Golgi intermediate compartment) and thereby secretion. Interacts with IL1R1. Interacts with S100A13; this interaction is the first step in the export of IL1A, followed by direct translocation of this complex across the plasma membrane. Acetylated within its nuclear localization sequence, which impacts subcellular localization. Post-translationally, proteolytic processed by CAPN1 in a calcium-dependent manner. Cleavage from 31 kDa precursor to 18 kDa biologically active molecules. In terms of processing, phosphorylated. Phosphorylation greatly enhances susceptibility to digestion and promotes the conversion of pre-IL1A alpha to the biologically active IL1A.

The protein resides in the nucleus. It localises to the cytoplasm. Its subcellular location is the secreted. In terms of biological role, cytokine constitutively present intracellularly in nearly all resting non-hematopoietic cells that plays an important role in inflammation and bridges the innate and adaptive immune systems. After binding to its receptor IL1R1 together with its accessory protein IL1RAP, forms the high affinity interleukin-1 receptor complex. Signaling involves the recruitment of adapter molecules such as MYD88, IRAK1 or IRAK4. In turn, mediates the activation of NF-kappa-B and the three MAPK pathways p38, p42/p44 and JNK pathways. Within the cell, acts as an alarmin and cell death results in its liberation in the extracellular space after disruption of the cell membrane to induce inflammation and alert the host to injury or damage. In addition to its role as a danger signal, which occurs when the cytokine is passively released by cell necrosis, directly senses DNA damage and acts as signal for genotoxic stress without loss of cell integrity. This Macaca fascicularis (Crab-eating macaque) protein is Interleukin-1 alpha (IL1A).